A 722-amino-acid chain; its full sequence is Polyribonucleotide nucleotidyltransferase (722 aa).

Mg(2+) is bound by residues Asp486 and Asp492. The KH domain occupies 553–612; sequence PKIVQLQIDIDKISLVIGSTGKTVKAITDEFEVKVQIEQNGKIILFGDDDFKMQKAKERI. The region spanning 622–717 is the S1 motif domain; sequence GEIYEGTVKK…KFGKIDLEIV (96 aa).

It belongs to the polyribonucleotide nucleotidyltransferase family. The cofactor is Mg(2+).

It localises to the cytoplasm. The catalysed reaction is RNA(n+1) + phosphate = RNA(n) + a ribonucleoside 5'-diphosphate. Its function is as follows. Involved in mRNA degradation. Catalyzes the phosphorolysis of single-stranded polyribonucleotides processively in the 3'- to 5'-direction. This is Polyribonucleotide nucleotidyltransferase from Borreliella burgdorferi (strain ZS7) (Borrelia burgdorferi).